The following is a 444-amino-acid chain: Ribulose bisphosphate carboxylase (444 aa).

The Proton acceptor role is filled by K163. K165 contributes to the substrate binding site. The Mg(2+) site is built by K189, D191, and E192. N6-carboxylysine is present on K189. H281 acts as the Proton acceptor in catalysis. Substrate is bound by residues R282, H314, 367–369, and 389–392; these read SGG and QLGG.

The protein belongs to the RuBisCO large chain family. Type III subfamily. In terms of assembly, homodimer or homodecamer. In contrast to form I RuBisCO, the form III RuBisCO is composed solely of large subunits. Mg(2+) is required as a cofactor.

It carries out the reaction 2 (2R)-3-phosphoglycerate + 2 H(+) = D-ribulose 1,5-bisphosphate + CO2 + H2O. The enzyme catalyses D-ribulose 1,5-bisphosphate + O2 = 2-phosphoglycolate + (2R)-3-phosphoglycerate + 2 H(+). Catalyzes the addition of molecular CO(2) and H(2)O to ribulose 1,5-bisphosphate (RuBP), generating two molecules of 3-phosphoglycerate (3-PGA). Functions in an archaeal AMP degradation pathway, together with AMP phosphorylase and R15P isomerase. This is Ribulose bisphosphate carboxylase from Thermococcus onnurineus (strain NA1).